An 88-amino-acid chain; its full sequence is DNA-directed RNA polymerase subunit omega (88 aa).

Belongs to the RNA polymerase subunit omega family. The RNAP catalytic core consists of 2 alpha, 1 beta, 1 beta' and 1 omega subunit. When a sigma factor is associated with the core the holoenzyme is formed, which can initiate transcription.

The catalysed reaction is RNA(n) + a ribonucleoside 5'-triphosphate = RNA(n+1) + diphosphate. Its function is as follows. Promotes RNA polymerase assembly. Latches the N- and C-terminal regions of the beta' subunit thereby facilitating its interaction with the beta and alpha subunits. The protein is DNA-directed RNA polymerase subunit omega of Clostridioides difficile (strain 630) (Peptoclostridium difficile).